Here is a 229-residue protein sequence, read N- to C-terminus: Type III pantothenate kinase (229 aa).

6–13 provides a ligand contact to ATP; that stretch reads NIGNSRQH. Substrate-binding positions include Tyr-77 and 81–84; that span reads GIDR. Residue Asp-83 is the Proton acceptor of the active site. Asp-103 lines the K(+) pocket. ATP is bound at residue Thr-106. Position 159 (Thr-159) interacts with substrate.

It belongs to the type III pantothenate kinase family. In terms of assembly, homodimer. NH4(+) is required as a cofactor. It depends on K(+) as a cofactor.

It localises to the cytoplasm. It carries out the reaction (R)-pantothenate + ATP = (R)-4'-phosphopantothenate + ADP + H(+). Its pathway is cofactor biosynthesis; coenzyme A biosynthesis; CoA from (R)-pantothenate: step 1/5. Its function is as follows. Catalyzes the phosphorylation of pantothenate (Pan), the first step in CoA biosynthesis. The protein is Type III pantothenate kinase of Gloeobacter violaceus (strain ATCC 29082 / PCC 7421).